We begin with the raw amino-acid sequence, 648 residues long: Fidgetin-like protein 2 (648 aa).

The tract at residues 1–36 (MHWTPEHAQPLNQWPEQHLDVSSTTPSPAHKLELPP) is disordered. Positions 10–27 (PLNQWPEQHLDVSSTTPS) are enriched in polar residues. Residues A394 and 434–439 (GCGKAL) each bind ATP.

It belongs to the AAA ATPase family. The cofactor is Mg(2+).

Its subcellular location is the cytoplasm. The protein localises to the cell cortex. It carries out the reaction ATP + H2O = ADP + phosphate + H(+). Its function is as follows. Microtubule-severing enzyme that negatively regulates cell migration and wound healing. In migrating cells, targets dynamic microtubules (MTs) at the leading edge and severs them, thereby suppressing motility. Microtubule severing releases ARHGEF2 which activates RHOA, which in turn regulates focal ahesion turnover via focal adhesion kinase, as opposed to F-actin polymerization, to suppress cell motility. Negative regulator of axon regeneration that suppresses axonal growth by selectively severing dynamic MTs in the distal axon shaft and growth cone. Contributes to proper cell branching during endothelial and neuronal development. The polypeptide is Fidgetin-like protein 2 (Fignl2) (Rattus norvegicus (Rat)).